A 404-amino-acid chain; its full sequence is MSKVNVNKVVVAYSGGLDTSVIIPWLKENYDCEVVAFVADVGQGAEELEGIEAKAKASGASECYIADLKEEMVADYIFPTLKTGAYYEGKYLLGTSMARPIIAKAQVEVARKVGADALCHGCTGKGNDQVRFEGAFAALAPDLHVIAPWREWDLVSREECLDYLAERNIPCSASLTKIYSRDANAWHISTEGGVLEDTWNAPNEDCWAWTVDPEQAPNEAETVTLKVAKGEIVEVDGEAMTPYNALVYLNEKGAKHGVGRIDIVENRLVGMKSRGCYETPGGTIMMEALRAVEQLVLDKASFEFREELGLKASHLVYDGRWFTPLCKSILAASEELAQDVNGEVVVKLYKGQATVTQKRSDNSLYSEEFATFGEDEVYDQSHAEGFIRLYSLSSRIRALNSQKK.

ATP contacts are provided by residues 12-20 and A39; that span reads AYSGGLDTS. The L-citrulline site is built by Y91 and S96. Residue G121 coordinates ATP. Residues T123, N127, and D128 each coordinate L-aspartate. N127 is an L-citrulline binding site. Residues R131, S180, S189, E265, and Y277 each contribute to the L-citrulline site.

The protein belongs to the argininosuccinate synthase family. Type 1 subfamily. Homotetramer.

The protein localises to the cytoplasm. The catalysed reaction is L-citrulline + L-aspartate + ATP = 2-(N(omega)-L-arginino)succinate + AMP + diphosphate + H(+). The protein operates within amino-acid biosynthesis; L-arginine biosynthesis; L-arginine from L-ornithine and carbamoyl phosphate: step 2/3. The sequence is that of Argininosuccinate synthase from Vibrio campbellii (strain ATCC BAA-1116).